Here is a 475-residue protein sequence, read N- to C-terminus: Fez family zinc finger protein 1 (475 aa).

The short motif at 28–43 (PLAFSIERIMARTPEP) is the Engrailed homology 1 repressor element. 6 C2H2-type zinc fingers span residues 260–282 (FTCE…MPVH), 288–310 (FVCK…KIIH), 316–338 (HKCN…TRIH), 344–366 (FVCE…KLTH), 372–394 (FKCN…MHTH), and 400–423 (FTCP…RKLH). Positions 425-475 (SSLGLTRTPTGEPSSDPPPQLQQPPPAPLPPLQPTLPPPGPLPSGLHQGHQ) are disordered. The span at 427-437 (LGLTRTPTGEP) shows a compositional bias: polar residues. Over residues 439 to 466 (SDPPPQLQQPPPAPLPPLQPTLPPPGPL) the composition is skewed to pro residues.

Belongs to the krueppel C2H2-type zinc-finger protein family.

It localises to the nucleus. Functionally, transcription repressor. Involved in the axonal projection and proper termination of olfactory sensory neurons (OSN). Plays a role in rostro-caudal patterning of the diencephalon and in prethalamic formation. Expression is required in OSN to cell-autonomously regulate OSN axon projections. Regulates non-cell-autonomously the layer formation of the olfactory bulb development and the interneurons. May be required for correct rostral migration of the interneuron progenitors. This is Fez family zinc finger protein 1 (Fezf1) from Mus musculus (Mouse).